A 389-amino-acid chain; its full sequence is Acetyl-CoA decarbonylase/synthase complex subunit delta (389 aa).

It belongs to the CdhD family. In terms of assembly, heterodimer of delta and gamma chains. The ACDS complex is made up of alpha, epsilon, beta, gamma and delta chains with a probable stoichiometry of (alpha(2)epsilon(2))(4)-beta(8)-(gamma(1)delta(1))(8).

Functionally, part of a complex that catalyzes the reversible cleavage of acetyl-CoA, allowing autotrophic growth from CO(2). Probably maintains the overall quaternary structure of the ACDS complex. This is Acetyl-CoA decarbonylase/synthase complex subunit delta from Methanothermobacter thermautotrophicus (strain ATCC 29096 / DSM 1053 / JCM 10044 / NBRC 100330 / Delta H) (Methanobacterium thermoautotrophicum).